A 180-amino-acid chain; its full sequence is Small ribosomal subunit protein uS4 (180 aa).

In terms of domain architecture, S4 RNA-binding spans 102–174 (RRLQTMLVRK…PARKLEQKEE (73 aa)). The disordered stretch occupies residues 154–180 (VPFSPLANPEHPARKLEQKEETNEESA). Basic and acidic residues predominate over residues 164 to 174 (HPARKLEQKEE).

This sequence belongs to the universal ribosomal protein uS4 family. In terms of assembly, part of the 30S ribosomal subunit. Contacts protein S5. The interaction surface between S4 and S5 is involved in control of translational fidelity.

One of the primary rRNA binding proteins, it binds directly to 16S rRNA where it nucleates assembly of the body of the 30S subunit. In terms of biological role, with S5 and S12 plays an important role in translational accuracy. The chain is Small ribosomal subunit protein uS4 from Nanoarchaeum equitans (strain Kin4-M).